A 943-amino-acid chain; its full sequence is Isoleucine--tRNA ligase (943 aa).

Residues 59 to 69 (PYANGRIHLGH) carry the 'HIGH' region motif. E577 provides a ligand contact to L-isoleucyl-5'-AMP. Residues 618–622 (KMSKS) carry the 'KMSKS' region motif. Residue K621 participates in ATP binding. Zn(2+)-binding residues include C906, C909, C926, and C929.

It belongs to the class-I aminoacyl-tRNA synthetase family. IleS type 1 subfamily. As to quaternary structure, monomer. It depends on Zn(2+) as a cofactor.

It localises to the cytoplasm. It carries out the reaction tRNA(Ile) + L-isoleucine + ATP = L-isoleucyl-tRNA(Ile) + AMP + diphosphate. In terms of biological role, catalyzes the attachment of isoleucine to tRNA(Ile). As IleRS can inadvertently accommodate and process structurally similar amino acids such as valine, to avoid such errors it has two additional distinct tRNA(Ile)-dependent editing activities. One activity is designated as 'pretransfer' editing and involves the hydrolysis of activated Val-AMP. The other activity is designated 'posttransfer' editing and involves deacylation of mischarged Val-tRNA(Ile). The polypeptide is Isoleucine--tRNA ligase (Stenotrophomonas maltophilia (strain K279a)).